Reading from the N-terminus, the 102-residue chain is Protamine-2 (102 aa).

The tract at residues 1–102 (MVRYRMRSLS…RTRRRRCRRH (102 aa)) is disordered. Residues Ser-8 and Ser-10 each carry the phosphoserine modification. The span at 8–17 (SLSERSHEVH) shows a compositional bias: basic and acidic residues. Positions 18 to 29 (GQQVHGQDQGHN) are enriched in low complexity. Residues 39–48 (EHVEVYERTH) show a composition bias toward basic and acidic residues. A compositionally biased stretch (basic residues) spans 49–102 (GHSHYRRRHCSRRRLHRIHRRRHRSCRRRRRRSCRHRRRHRRGCRTRRRRCRRH).

Belongs to the protamine P2 family. Interacts with TDRP. Proteolytic processing into mature chains is required for histone eviction during spermatogenesis. Transition proteins (TNP1 and TNP2) are required for processing. In terms of tissue distribution, testis.

It is found in the nucleus. It localises to the chromosome. Its function is as follows. Protamines substitute for histones in the chromatin of sperm during the haploid phase of spermatogenesis. They compact sperm DNA into a highly condensed, stable and inactive complex. The sequence is that of Protamine-2 (PRM2) from Macaca mulatta (Rhesus macaque).